Consider the following 475-residue polypeptide: MKHAIRHIHFVGLGGAGMCGIAEVLFNLGYEISGSDLADSATLRRLAALGIATRVGHAAAHIEGADAVVTSTAVQSDNPEVIAARERKIPVVPRALMLAELMRLKRGIAIAGTHGKTTTTSLVTSVLAEAGLDPTFVIGGRLNSAGANAKLGQGEYIVVEADESDASFLNLLPVMAVVTNIDADHMETYGHDFGRLKSAFVDFLHRMPFYGTAILCTDNPAIREILPDVTCPVTSYGFSEDAQVRAVDVRADAGRMRFRVQRRNGVTLPDLDVVLNLAGEHNVLNALSAIAVAVELNIPDEALLRALAQFKGVGRRFQRYGELPAQGGGTFTLIEDYGHHPVEMTATLAAARGAFPGRRLVLAFQPHRYSRTRDCFEDFVKVMGSADAVLLTEVYAAGEAPIVAADGRSLARAVRVAGQVEPVFVDDIGELPRRIADNARGGDVVLCMGAGSIGAVPAKVVEMLRTDVPAMQEDR.

112–118 is a binding site for ATP; sequence GTHGKTT.

It belongs to the MurCDEF family.

Its subcellular location is the cytoplasm. The enzyme catalyses UDP-N-acetyl-alpha-D-muramate + L-alanine + ATP = UDP-N-acetyl-alpha-D-muramoyl-L-alanine + ADP + phosphate + H(+). It functions in the pathway cell wall biogenesis; peptidoglycan biosynthesis. Its function is as follows. Cell wall formation. This Paracidovorax citrulli (strain AAC00-1) (Acidovorax citrulli) protein is UDP-N-acetylmuramate--L-alanine ligase.